A 123-amino-acid polypeptide reads, in one-letter code: CD59A glycoprotein (123 aa).

The signal sequence occupies residues 1–23 (MRAQRGLILLLLLLAVFCSTAVS). The 73-residue stretch at 24–96 (LTCYHCFQPV…CCQFNLCNKS (73 aa)) folds into the UPAR/Ly6 domain. 5 disulfide bridges follow: C26–C50, C29–C37, C43–C63, C69–C87, and C88–C93. A glycan (N-linked (GlcNAc...) asparagine) is linked at N40. N94 is a glycosylation site (N-linked (GlcNAc...) asparagine). Positions 97–123 (DGSLGKTPLLGTSVLVAILNLCFLSHL) are cleaved as a propeptide — removed in mature form.

In terms of assembly, interacts with T-cell surface antigen CD2. Post-translationally, N- and O-glycosylated. In terms of tissue distribution, expressed in all tissues examined (liver, kidney, spleen, thymus, brain and heart). Low levels in thymus. Also expressed in mononuclear cells, erythrocytes and platelets. Barely detected in neutrophils.

The protein localises to the cell membrane. The protein resides in the secreted. Potent inhibitor of the complement membrane attack complex (MAC) action, which protects self-cells from damage during complement activation. Acts by binding to the beta-haipins of C8 (C8A and C8B) components of the assembling MAC, forming an intermolecular beta-sheet that prevents incorporation of the multiple copies of C9 required for complete formation of the osmolytic pore. This Mus musculus (Mouse) protein is CD59A glycoprotein.